An 87-amino-acid polypeptide reads, in one-letter code: HssA/B-like protein 31 (87 aa).

The protein belongs to the hssA/B family.

This Dictyostelium discoideum (Social amoeba) protein is HssA/B-like protein 31 (hssl31).